The primary structure comprises 367 residues: tRNA/tmRNA (uracil-C(5))-methyltransferase (367 aa).

S-adenosyl-L-methionine-binding residues include glutamine 190, tyrosine 218, asparagine 223, glutamate 239, and aspartate 299. Cysteine 324 acts as the Nucleophile in catalysis. The Proton acceptor role is filled by glutamate 358.

Belongs to the class I-like SAM-binding methyltransferase superfamily. RNA M5U methyltransferase family. TrmA subfamily.

The catalysed reaction is uridine(54) in tRNA + S-adenosyl-L-methionine = 5-methyluridine(54) in tRNA + S-adenosyl-L-homocysteine + H(+). It carries out the reaction uridine(341) in tmRNA + S-adenosyl-L-methionine = 5-methyluridine(341) in tmRNA + S-adenosyl-L-homocysteine + H(+). Dual-specificity methyltransferase that catalyzes the formation of 5-methyluridine at position 54 (m5U54) in all tRNAs, and that of position 341 (m5U341) in tmRNA (transfer-mRNA). In Dickeya chrysanthemi (strain Ech1591) (Dickeya zeae (strain Ech1591)), this protein is tRNA/tmRNA (uracil-C(5))-methyltransferase.